The chain runs to 124 residues: Small ribosomal subunit protein bS6 (124 aa).

The segment covering 105 to 115 has biased composition (basic and acidic residues); the sequence is EVQHEEARKSA. The tract at residues 105 to 124 is disordered; sequence EVQHEEARKSAQSDAPVAAA.

It belongs to the bacterial ribosomal protein bS6 family.

Its function is as follows. Binds together with bS18 to 16S ribosomal RNA. In Polynucleobacter necessarius subsp. necessarius (strain STIR1), this protein is Small ribosomal subunit protein bS6.